Reading from the N-terminus, the 181-residue chain is Ribonuclease HII (181 aa).

Positions 1–181 constitute an RNase H type-2 domain; it reads MICGIDEVGR…SLHRKNFKLI (181 aa). Residues D6, E7, and D98 each contribute to the a divalent metal cation site.

It belongs to the RNase HII family. The cofactor is Mn(2+). Mg(2+) is required as a cofactor.

It is found in the cytoplasm. It catalyses the reaction Endonucleolytic cleavage to 5'-phosphomonoester.. Its function is as follows. Endonuclease that specifically degrades the RNA of RNA-DNA hybrids. The protein is Ribonuclease HII of Borreliella afzelii (strain PKo) (Borrelia afzelii).